The following is a 122-amino-acid chain: ATP synthase epsilon chain (122 aa).

The segment covering 97 to 112 (EDLKSERELTRSRGDA) has biased composition (basic and acidic residues). Positions 97–122 (EDLKSERELTRSRGDAALRATRRLNS) are disordered.

The protein belongs to the ATPase epsilon chain family. As to quaternary structure, F-type ATPases have 2 components, CF(1) - the catalytic core - and CF(0) - the membrane proton channel. CF(1) has five subunits: alpha(3), beta(3), gamma(1), delta(1), epsilon(1). CF(0) has three main subunits: a, b and c.

The protein resides in the cell membrane. Its function is as follows. Produces ATP from ADP in the presence of a proton gradient across the membrane. The polypeptide is ATP synthase epsilon chain (Corynebacterium aurimucosum (strain ATCC 700975 / DSM 44827 / CIP 107346 / CN-1) (Corynebacterium nigricans)).